The following is a 347-amino-acid chain: Ribosomal RNA small subunit methyltransferase C (347 aa).

Belongs to the methyltransferase superfamily. RsmC family. In terms of assembly, monomer.

It localises to the cytoplasm. It catalyses the reaction guanosine(1207) in 16S rRNA + S-adenosyl-L-methionine = N(2)-methylguanosine(1207) in 16S rRNA + S-adenosyl-L-homocysteine + H(+). In terms of biological role, specifically methylates the guanine in position 1207 of 16S rRNA in the 30S particle. This Yersinia pseudotuberculosis serotype IB (strain PB1/+) protein is Ribosomal RNA small subunit methyltransferase C.